The sequence spans 206 residues: Large ribosomal subunit protein uL4 (206 aa).

Residues 65 to 85 (KQKGSGGARHGDRKAPQFRGG) are disordered.

The protein belongs to the universal ribosomal protein uL4 family. In terms of assembly, part of the 50S ribosomal subunit.

In terms of biological role, one of the primary rRNA binding proteins, this protein initially binds near the 5'-end of the 23S rRNA. It is important during the early stages of 50S assembly. It makes multiple contacts with different domains of the 23S rRNA in the assembled 50S subunit and ribosome. Its function is as follows. Forms part of the polypeptide exit tunnel. The polypeptide is Large ribosomal subunit protein uL4 (Parvibaculum lavamentivorans (strain DS-1 / DSM 13023 / NCIMB 13966)).